The following is a 329-amino-acid chain: Acetyl-coenzyme A carboxylase carboxyl transferase subunit alpha (329 aa).

One can recognise a CoA carboxyltransferase C-terminal domain in the interval 40–294 (QLESLAARRR…RAALERHLGE (255 aa)).

The protein belongs to the AccA family. Acetyl-CoA carboxylase is a heterohexamer composed of biotin carboxyl carrier protein (AccB), biotin carboxylase (AccC) and two subunits each of ACCase subunit alpha (AccA) and ACCase subunit beta (AccD).

It is found in the cytoplasm. It carries out the reaction N(6)-carboxybiotinyl-L-lysyl-[protein] + acetyl-CoA = N(6)-biotinyl-L-lysyl-[protein] + malonyl-CoA. Its pathway is lipid metabolism; malonyl-CoA biosynthesis; malonyl-CoA from acetyl-CoA: step 1/1. Component of the acetyl coenzyme A carboxylase (ACC) complex. First, biotin carboxylase catalyzes the carboxylation of biotin on its carrier protein (BCCP) and then the CO(2) group is transferred by the carboxyltransferase to acetyl-CoA to form malonyl-CoA. The protein is Acetyl-coenzyme A carboxylase carboxyl transferase subunit alpha of Parasynechococcus marenigrum (strain WH8102).